Reading from the N-terminus, the 278-residue chain is Undecaprenyl-diphosphatase (278 aa).

8 helical membrane-spanning segments follow: residues 3–23, 42–62, 88–108, 112–132, 152–172, 190–210, 225–245, and 253–273; these read YILI…IPIS, VAYS…IFYF, FLVI…LFVI, ILGL…IVIY, IIIV…RSGM, LSFI…VLFS, GLLI…NALL, and VVLL…LSDI.

It belongs to the UppP family.

The protein localises to the cell membrane. The catalysed reaction is di-trans,octa-cis-undecaprenyl diphosphate + H2O = di-trans,octa-cis-undecaprenyl phosphate + phosphate + H(+). Its function is as follows. Catalyzes the dephosphorylation of undecaprenyl diphosphate (UPP). The sequence is that of Undecaprenyl-diphosphatase from Saccharolobus solfataricus (strain ATCC 35092 / DSM 1617 / JCM 11322 / P2) (Sulfolobus solfataricus).